The primary structure comprises 99 residues: Signal recognition particle 19 kDa protein (99 aa).

It belongs to the SRP19 family. In terms of assembly, part of the signal recognition particle protein translocation system, which is composed of SRP and FtsY. Archaeal SRP consists of a 7S RNA molecule of 300 nucleotides and two protein subunits: SRP54 and SRP19.

The protein resides in the cytoplasm. Functionally, involved in targeting and insertion of nascent membrane proteins into the cytoplasmic membrane. Binds directly to 7S RNA and mediates binding of the 54 kDa subunit of the SRP. This chain is Signal recognition particle 19 kDa protein, found in Pyrococcus abyssi (strain GE5 / Orsay).